A 96-amino-acid polypeptide reads, in one-letter code: Fruit-specific protein (96 aa).

Disulfide bonds link C59–C75, C63–C78, and C69–C92.

As to expression, fruit specific.

This Solanum lycopersicum (Tomato) protein is Fruit-specific protein (2A11).